A 365-amino-acid polypeptide reads, in one-letter code: DNA replication and repair protein RecF (365 aa).

30–37 is a binding site for ATP; the sequence is GDNGEGKT.

Belongs to the RecF family.

It localises to the cytoplasm. In terms of biological role, the RecF protein is involved in DNA metabolism; it is required for DNA replication and normal SOS inducibility. RecF binds preferentially to single-stranded, linear DNA. It also seems to bind ATP. The protein is DNA replication and repair protein RecF of Leptospira borgpetersenii serovar Hardjo-bovis (strain JB197).